Reading from the N-terminus, the 458-residue chain is Argininosuccinate lyase (458 aa).

The protein belongs to the lyase 1 family. Argininosuccinate lyase subfamily.

It is found in the cytoplasm. The enzyme catalyses 2-(N(omega)-L-arginino)succinate = fumarate + L-arginine. Its pathway is amino-acid biosynthesis; L-arginine biosynthesis; L-arginine from L-ornithine and carbamoyl phosphate: step 3/3. The polypeptide is Argininosuccinate lyase (Pseudoalteromonas atlantica (strain T6c / ATCC BAA-1087)).